The sequence spans 250 residues: Uracil-DNA glycosylase (250 aa).

Catalysis depends on Asp78, which acts as the Proton acceptor. The tract at residues Arg228–Leu250 is disordered.

The protein belongs to the uracil-DNA glycosylase (UDG) superfamily. UNG family.

The protein resides in the cytoplasm. It catalyses the reaction Hydrolyzes single-stranded DNA or mismatched double-stranded DNA and polynucleotides, releasing free uracil.. Excises uracil residues from the DNA which can arise as a result of misincorporation of dUMP residues by DNA polymerase or due to deamination of cytosine. The chain is Uracil-DNA glycosylase from Bordetella bronchiseptica (strain ATCC BAA-588 / NCTC 13252 / RB50) (Alcaligenes bronchisepticus).